A 326-amino-acid chain; its full sequence is B3 domain-containing protein At5g60130 (326 aa).

Residues 12 to 110 (PKFFKVYLPD…CFHFCIYEHR (99 aa)) constitute a DNA-binding region (TF-B3). The disordered stretch occupies residues 124–222 (EEIKVESDSD…DEDERQYLDD (99 aa)). Over residues 143–199 (LSLDEDDDDSDYNCGEDNDSDDYADEAAVEKDDNDADDEDVDNVADDVPVEDDDYVE) the composition is skewed to acidic residues.

It localises to the nucleus. The polypeptide is B3 domain-containing protein At5g60130 (Arabidopsis thaliana (Mouse-ear cress)).